Consider the following 244-residue polypeptide: Ubiquinone/menaquinone biosynthesis C-methyltransferase UbiE (244 aa).

Residues Thr-70, Asp-91, and 117–118 (DA) contribute to the S-adenosyl-L-methionine site.

It belongs to the class I-like SAM-binding methyltransferase superfamily. MenG/UbiE family.

It catalyses the reaction a 2-demethylmenaquinol + S-adenosyl-L-methionine = a menaquinol + S-adenosyl-L-homocysteine + H(+). The enzyme catalyses a 2-methoxy-6-(all-trans-polyprenyl)benzene-1,4-diol + S-adenosyl-L-methionine = a 5-methoxy-2-methyl-3-(all-trans-polyprenyl)benzene-1,4-diol + S-adenosyl-L-homocysteine + H(+). Its pathway is quinol/quinone metabolism; menaquinone biosynthesis; menaquinol from 1,4-dihydroxy-2-naphthoate: step 2/2. It participates in cofactor biosynthesis; ubiquinone biosynthesis. Its function is as follows. Methyltransferase required for the conversion of demethylmenaquinol (DMKH2) to menaquinol (MKH2) and the conversion of 2-polyprenyl-6-methoxy-1,4-benzoquinol (DDMQH2) to 2-polyprenyl-3-methyl-6-methoxy-1,4-benzoquinol (DMQH2). In Chromobacterium violaceum (strain ATCC 12472 / DSM 30191 / JCM 1249 / CCUG 213 / NBRC 12614 / NCIMB 9131 / NCTC 9757 / MK), this protein is Ubiquinone/menaquinone biosynthesis C-methyltransferase UbiE.